Consider the following 178-residue polypeptide: ATP synthase subunit delta (178 aa).

The protein belongs to the ATPase delta chain family. As to quaternary structure, F-type ATPases have 2 components, F(1) - the catalytic core - and F(0) - the membrane proton channel. F(1) has five subunits: alpha(3), beta(3), gamma(1), delta(1), epsilon(1). F(0) has three main subunits: a(1), b(2) and c(10-14). The alpha and beta chains form an alternating ring which encloses part of the gamma chain. F(1) is attached to F(0) by a central stalk formed by the gamma and epsilon chains, while a peripheral stalk is formed by the delta and b chains.

The protein resides in the cell membrane. Its function is as follows. F(1)F(0) ATP synthase produces ATP from ADP in the presence of a proton or sodium gradient. F-type ATPases consist of two structural domains, F(1) containing the extramembraneous catalytic core and F(0) containing the membrane proton channel, linked together by a central stalk and a peripheral stalk. During catalysis, ATP synthesis in the catalytic domain of F(1) is coupled via a rotary mechanism of the central stalk subunits to proton translocation. In terms of biological role, this protein is part of the stalk that links CF(0) to CF(1). It either transmits conformational changes from CF(0) to CF(1) or is implicated in proton conduction. This is ATP synthase subunit delta from Mycoplasma pneumoniae (strain ATCC 29342 / M129 / Subtype 1) (Mycoplasmoides pneumoniae).